Reading from the N-terminus, the 81-residue chain is Small serum protein 4 (81 aa).

The signal sequence occupies residues 1-19; the sequence is MKVFFILIIFSFTLATCQG. 3 disulfides stabilise this stretch: Cys21–Cys74, Cys41–Cys66, and Cys64–Cys73.

Belongs to the beta-microseminoprotein family.

It is found in the secreted. In terms of biological role, shows an slight inhibitory effect toward the metalloproteinase brevilysin H6, but does not inhibit the metalloproteinases thermolysin, HR1A and HR1B. This chain is Small serum protein 4, found in Protobothrops flavoviridis (Habu).